Reading from the N-terminus, the 246-residue chain is 1-(5-phosphoribosyl)-5-[(5-phosphoribosylamino)methylideneamino] imidazole-4-carboxamide isomerase (246 aa).

Asp8 serves as the catalytic Proton acceptor. Asp131 serves as the catalytic Proton donor.

It belongs to the HisA/HisF family.

The protein resides in the cytoplasm. The catalysed reaction is 1-(5-phospho-beta-D-ribosyl)-5-[(5-phospho-beta-D-ribosylamino)methylideneamino]imidazole-4-carboxamide = 5-[(5-phospho-1-deoxy-D-ribulos-1-ylimino)methylamino]-1-(5-phospho-beta-D-ribosyl)imidazole-4-carboxamide. It functions in the pathway amino-acid biosynthesis; L-histidine biosynthesis; L-histidine from 5-phospho-alpha-D-ribose 1-diphosphate: step 4/9. The polypeptide is 1-(5-phosphoribosyl)-5-[(5-phosphoribosylamino)methylideneamino] imidazole-4-carboxamide isomerase (Bordetella avium (strain 197N)).